A 1050-amino-acid chain; its full sequence is Inositol hexakisphosphate kinase 1 (1050 aa).

Disordered stretches follow at residues K87 to S117, P129 to V177, R269 to H319, and S396 to D423. Residue S150 is modified to Phosphoserine. Over residues K156–P173 the composition is skewed to polar residues. The span at E290 to E306 shows a compositional bias: basic and acidic residues. Over residues Q307–D316 the composition is skewed to acidic residues. Position 396 is a phosphoserine (S396). Basic and acidic residues predominate over residues N402–V417. S469 bears the Phosphoserine mark. Positions N508 to S522 are enriched in low complexity. 2 disordered regions span residues N508 to S539 and R562 to Q625. Phosphoserine occurs at positions 537, 539, 566, 583, 589, 646, 664, and 670. A compositionally biased stretch (polar residues) spans S566–L624. P772–G780 is a substrate binding site.

It belongs to the inositol phosphokinase (IPK) family.

Its subcellular location is the cytoplasm. The enzyme catalyses 1D-myo-inositol hexakisphosphate + ATP = 5-diphospho-1D-myo-inositol 1,2,3,4,6-pentakisphosphate + ADP. It catalyses the reaction 1-diphospho-1D-myo-inositol 2,3,4,5,6-pentakisphosphate + ATP + H(+) = 1,5-bis(diphospho)-1D-myo-inositol 2,3,4,6-tetrakisphosphate + ADP. Its function is as follows. Converts inositol hexakisphosphate (InsP6) to diphosphoinositol pentakisphosphate (InsP7/PP-InsP5). Involved in phosphate regulation and polyphosphate accumulation. Required for resistance to salt stress, cell wall integrity, vacuole morphogenesis, and telomere maintenance. The protein is Inositol hexakisphosphate kinase 1 (KCS1) of Saccharomyces cerevisiae (strain ATCC 204508 / S288c) (Baker's yeast).